Consider the following 960-residue polypeptide: Isoleucine--tRNA ligase (960 aa).

A 'HIGH' region motif is present at residues 60 to 70 (PYANGSLHIGH). Glu573 contributes to the L-isoleucyl-5'-AMP binding site. The 'KMSKS' region motif lies at 614-618 (KMSKS). Lys617 contributes to the ATP binding site. Residues Cys929, Cys932, Cys949, and Cys952 each contribute to the Zn(2+) site.

The protein belongs to the class-I aminoacyl-tRNA synthetase family. IleS type 1 subfamily. As to quaternary structure, monomer. It depends on Zn(2+) as a cofactor.

It is found in the cytoplasm. It carries out the reaction tRNA(Ile) + L-isoleucine + ATP = L-isoleucyl-tRNA(Ile) + AMP + diphosphate. Catalyzes the attachment of isoleucine to tRNA(Ile). As IleRS can inadvertently accommodate and process structurally similar amino acids such as valine, to avoid such errors it has two additional distinct tRNA(Ile)-dependent editing activities. One activity is designated as 'pretransfer' editing and involves the hydrolysis of activated Val-AMP. The other activity is designated 'posttransfer' editing and involves deacylation of mischarged Val-tRNA(Ile). The polypeptide is Isoleucine--tRNA ligase (Nostoc sp. (strain PCC 7120 / SAG 25.82 / UTEX 2576)).